We begin with the raw amino-acid sequence, 567 residues long: R-linalool synthase QH1, chloroplastic (567 aa).

Residues 1–24 constitute a chloroplast transit peptide; the sequence is GNAYMRIYSTKTTRITANATVNAA. (2E)-geranyl diphosphate contacts are provided by arginine 282, aspartate 319, aspartate 323, arginine 460, and aspartate 463. Positions 319 and 323 each coordinate Mg(2+). A DDXXD motif motif is present at residues 319 to 323; it reads DDVYD. The Mg(2+) site is built by aspartate 463, threonine 467, and glutamate 471.

It belongs to the terpene synthase family. Tpsb subfamily. Requires Mg(2+) as cofactor. Highly expressed in leaves and lower levels in inflorescences. Not detected in stems, stem epidermis, stem stele or roots.

The protein resides in the plastid. Its subcellular location is the chloroplast. The catalysed reaction is (2E)-geranyl diphosphate + H2O = (R)-linalool + diphosphate. It participates in secondary metabolite biosynthesis; terpenoid biosynthesis. Monoterpene synthase that catalyzes the formation of (3R)-linalool from geranyl diphosphate, but not from isopentenyl diphosphate, dimethylallyl diphosphate, chrysanthemyl diphosphate, farnesyl diphosphate, (+)-copalyl diphosphate or geranylgeranyl diphosphate. The polypeptide is R-linalool synthase QH1, chloroplastic (QH1) (Artemisia annua (Sweet wormwood)).